The chain runs to 307 residues: Probable acetylxylan esterase A (307 aa).

The N-terminal stretch at Met1–Ala19 is a signal peptide. Ser150 functions as the Charge relay system in the catalytic mechanism. Asn192 and Asn270 each carry an N-linked (GlcNAc...) asparagine glycan.

The protein belongs to the carbohydrate esterase 1 (CE1) family. AxeA subfamily. In terms of assembly, monomer.

Its subcellular location is the secreted. It carries out the reaction Deacetylation of xylans and xylo-oligosaccharides.. The protein operates within glycan degradation; xylan degradation. In terms of biological role, acetylxylan esterase involved in the hydrolysis of xylan, a major structural heterogeneous polysaccharide found in plant biomass representing the second most abundant polysaccharide in the biosphere, after cellulose. Degrades acetylated xylans by cleaving acetyl side groups from the hetero-xylan backbone. The chain is Probable acetylxylan esterase A (axeA) from Aspergillus flavus (strain ATCC 200026 / FGSC A1120 / IAM 13836 / NRRL 3357 / JCM 12722 / SRRC 167).